A 339-amino-acid chain; its full sequence is Putative NADP-dependent oxidoreductase YfmJ (339 aa).

NADP(+)-binding positions include 156-159, lysine 182, tyrosine 198, asparagine 222, 244-250, 277-279, and asparagine 327; these read GAVG, CGAISSY, and FIV.

It belongs to the NADP-dependent oxidoreductase L4BD family.

Its function is as follows. Putative quinone oxidoreductase that may contribute to the degradation of aromatic compounds. The protein is Putative NADP-dependent oxidoreductase YfmJ (yfmJ) of Bacillus subtilis (strain 168).